The following is a 197-amino-acid chain: Fe/S biogenesis protein NfuA (197 aa).

2 residues coordinate [4Fe-4S] cluster: Cys155 and Cys158.

The protein belongs to the NfuA family. Homodimer. The cofactor is [4Fe-4S] cluster.

In terms of biological role, involved in iron-sulfur cluster biogenesis. Binds a 4Fe-4S cluster, can transfer this cluster to apoproteins, and thereby intervenes in the maturation of Fe/S proteins. Could also act as a scaffold/chaperone for damaged Fe/S proteins. This chain is Fe/S biogenesis protein NfuA, found in Pseudomonas savastanoi pv. phaseolicola (strain 1448A / Race 6) (Pseudomonas syringae pv. phaseolicola (strain 1448A / Race 6)).